The sequence spans 211 residues: Large ribosomal subunit protein uL3 (211 aa).

The protein belongs to the universal ribosomal protein uL3 family. As to quaternary structure, part of the 50S ribosomal subunit. Forms a cluster with proteins L14 and L19.

In terms of biological role, one of the primary rRNA binding proteins, it binds directly near the 3'-end of the 23S rRNA, where it nucleates assembly of the 50S subunit. This chain is Large ribosomal subunit protein uL3, found in Geobacter sp. (strain M21).